We begin with the raw amino-acid sequence, 161 residues long: Phosphopantetheine adenylyltransferase (161 aa).

Substrate is bound at residue Thr-10. ATP is bound by residues 10 to 11 and His-18; that span reads TF. Positions 42, 74, and 88 each coordinate substrate. Residues 89-91, Glu-99, and 124-130 each bind ATP; these read GLR and NAFISSS.

Belongs to the bacterial CoaD family. In terms of assembly, homohexamer. The cofactor is Mg(2+).

It localises to the cytoplasm. The catalysed reaction is (R)-4'-phosphopantetheine + ATP + H(+) = 3'-dephospho-CoA + diphosphate. It functions in the pathway cofactor biosynthesis; coenzyme A biosynthesis; CoA from (R)-pantothenate: step 4/5. Reversibly transfers an adenylyl group from ATP to 4'-phosphopantetheine, yielding dephospho-CoA (dPCoA) and pyrophosphate. The protein is Phosphopantetheine adenylyltransferase of Wolinella succinogenes (strain ATCC 29543 / DSM 1740 / CCUG 13145 / JCM 31913 / LMG 7466 / NCTC 11488 / FDC 602W) (Vibrio succinogenes).